The chain runs to 398 residues: Apolipoprotein L1 (398 aa).

Positions 1-27 are cleaved as a signal peptide; that stretch reads MEGAALLRVSVLCIWMSALFLGVGVRA. A compositionally biased stretch (polar residues) spans 35-47; it reads QQNVPSGTDTGDP. The segment at 35–55 is disordered; it reads QQNVPSGTDTGDPQSKPLGDW. N-linked (GlcNAc...) asparagine glycosylation is present at asparagine 261. Positions 297–317 are disordered; the sequence is PHASASRPRVTEPISAESGEQ. Serine 311 and serine 314 each carry phosphoserine; by FAM20C.

The protein belongs to the apolipoprotein L family. In plasma, interacts with APOA1 and mainly associated with large high density lipoprotein particles. In terms of processing, phosphorylated by FAM20C in the extracellular medium. Plasma. Found on APOA-I-containing high density lipoprotein (HDL3). Expressed in pancreas, lung, prostate, liver, placenta and spleen.

Its subcellular location is the secreted. Its function is as follows. May play a role in lipid exchange and transport throughout the body. May participate in reverse cholesterol transport from peripheral cells to the liver. The protein is Apolipoprotein L1 (APOL1) of Homo sapiens (Human).